Reading from the N-terminus, the 174-residue chain is Small ribosomal subunit protein uS7c (174 aa).

It belongs to the universal ribosomal protein uS7 family. Part of the 30S ribosomal subunit.

It is found in the plastid. It localises to the chloroplast. One of the primary rRNA binding proteins, it binds directly to 16S rRNA where it nucleates assembly of the head domain of the 30S subunit. The sequence is that of Small ribosomal subunit protein uS7c (rps7) from Stigeoclonium helveticum (Green alga).